The sequence spans 279 residues: Thymidylate synthase (279 aa).

DUMP is bound at residue arginine 21. Residue histidine 51 coordinates (6R)-5,10-methylene-5,6,7,8-tetrahydrofolate. 126–127 (RR) serves as a coordination point for dUMP. Residue cysteine 159 is the Nucleophile of the active site. Residues 179-182 (RSAD), asparagine 190, and 220-222 (HLY) contribute to the dUMP site. Aspartate 182 is a binding site for (6R)-5,10-methylene-5,6,7,8-tetrahydrofolate. Alanine 278 contacts (6R)-5,10-methylene-5,6,7,8-tetrahydrofolate.

Belongs to the thymidylate synthase family. Bacterial-type ThyA subfamily. Homodimer.

It localises to the cytoplasm. It carries out the reaction dUMP + (6R)-5,10-methylene-5,6,7,8-tetrahydrofolate = 7,8-dihydrofolate + dTMP. It functions in the pathway pyrimidine metabolism; dTTP biosynthesis. Its function is as follows. Catalyzes the reductive methylation of 2'-deoxyuridine-5'-monophosphate (dUMP) to 2'-deoxythymidine-5'-monophosphate (dTMP) while utilizing 5,10-methylenetetrahydrofolate (mTHF) as the methyl donor and reductant in the reaction, yielding dihydrofolate (DHF) as a by-product. This enzymatic reaction provides an intracellular de novo source of dTMP, an essential precursor for DNA biosynthesis. The chain is Thymidylate synthase from Marinobacter nauticus (strain ATCC 700491 / DSM 11845 / VT8) (Marinobacter aquaeolei).